The chain runs to 136 residues: Small ribosomal subunit protein uS8 (136 aa).

Belongs to the universal ribosomal protein uS8 family. Part of the 30S ribosomal subunit. Contacts proteins S5 and S12.

One of the primary rRNA binding proteins, it binds directly to 16S rRNA central domain where it helps coordinate assembly of the platform of the 30S subunit. The polypeptide is Small ribosomal subunit protein uS8 (Persephonella marina (strain DSM 14350 / EX-H1)).